Here is a 270-residue protein sequence, read N- to C-terminus: Putative pyruvate, phosphate dikinase regulatory protein (270 aa).

An ADP-binding site is contributed by 151–158 (GVSRTSKT).

It belongs to the pyruvate, phosphate/water dikinase regulatory protein family. PDRP subfamily.

The catalysed reaction is N(tele)-phospho-L-histidyl/L-threonyl-[pyruvate, phosphate dikinase] + ADP = N(tele)-phospho-L-histidyl/O-phospho-L-threonyl-[pyruvate, phosphate dikinase] + AMP + H(+). The enzyme catalyses N(tele)-phospho-L-histidyl/O-phospho-L-threonyl-[pyruvate, phosphate dikinase] + phosphate + H(+) = N(tele)-phospho-L-histidyl/L-threonyl-[pyruvate, phosphate dikinase] + diphosphate. In terms of biological role, bifunctional serine/threonine kinase and phosphorylase involved in the regulation of the pyruvate, phosphate dikinase (PPDK) by catalyzing its phosphorylation/dephosphorylation. The sequence is that of Putative pyruvate, phosphate dikinase regulatory protein (yqfL) from Bacillus subtilis (strain 168).